A 1703-amino-acid chain; its full sequence is Ferlin 2 (1703 aa).

C2 domains are found at residues 18-141 and 207-332; these read IRKL…KTWL and KQPV…FRWF. Disordered stretches follow at residues 913–937, 970–1025, and 1194–1228; these read NQFN…FDDN, NLDK…TSST, and KNKS…QKLG. Over residues 916-928 the composition is skewed to acidic residues; the sequence is NDDDEGDNEDEQD. Residues 979–991 show a composition bias toward polar residues; the sequence is QPQSLKNLQNLDS. The segment covering 993-1009 has biased composition (basic and acidic residues); sequence SKADQKSQFDLKSESKS. A compositionally biased stretch (low complexity) spans 1198–1209; that stretch reads NRSSMSLSMRSS. A C2 3 domain is found at 1466-1595; the sequence is VARIIPPSTI…LKKLKEGIVF (130 aa). The disordered stretch occupies residues 1628-1651; the sequence is AAESDPVGEGQNEPNKDPILEKPK. The segment covering 1641-1651 has biased composition (basic and acidic residues); it reads PNKDPILEKPK. The helical transmembrane segment at 1681–1701 threads the bilayer; that stretch reads FAGIFVSIVTMMILFVKPGIL.

Belongs to the ferlin family.

Its subcellular location is the membrane. In terms of biological role, regulates mucocyst exocytosis. This is Ferlin 2 from Tetrahymena thermophila (strain SB210).